The primary structure comprises 623 residues: Methionine--tRNA ligase (623 aa).

The short motif at 11–21 (PYANGPRHIGH) is the 'HIGH' region element. Zn(2+) contacts are provided by Cys-143, Cys-146, Cys-156, and Cys-159. Residues 347 to 351 (KFSSS) carry the 'KMSKS' region motif. Ser-350 contacts ATP.

Belongs to the class-I aminoacyl-tRNA synthetase family. MetG type 1 subfamily. Monomer. The cofactor is Zn(2+).

It is found in the cytoplasm. It carries out the reaction tRNA(Met) + L-methionine + ATP = L-methionyl-tRNA(Met) + AMP + diphosphate. Functionally, is required not only for elongation of protein synthesis but also for the initiation of all mRNA translation through initiator tRNA(fMet) aminoacylation. The polypeptide is Methionine--tRNA ligase (Bifidobacterium animalis subsp. lactis (strain AD011)).